The following is a 475-amino-acid chain: Peripherin (475 aa).

The tract at residues 1 to 42 is disordered; that stretch reads MPSSASMSHHHSSGLRSSISSTSYRRTFGPPPSLSPGAFSYS. Residues 1–103 are head; sequence MPSSASMSHH…FLATRSNEKQ (103 aa). The span at 14–26 shows a compositional bias: low complexity; the sequence is GLRSSISSTSYRR. Y24 is modified (3'-nitrotyrosine). Residues S35 and S57 each carry the phosphoserine modification. A Phosphoserine; by PKB/AKT1 modification is found at S66. Residues 101–411 form the IF rod domain; that stretch reads EKQELQELND…KLLEGEESRI (311 aa). Residues 104–136 form a coil 1A region; sequence ELQELNDRFANFIEKVRFLEQQNAALRGELSQA. Positions 137-147 are linker 1; it reads RGQEPARADQL. The interval 148–243 is coil 1B; it reads CQQELRELRR…KLHEEELRDL (96 aa). The linker 2 stretch occupies residues 244–266; the sequence is QVSVESQQVQQVEVEATVKPELT. The coil 2 stretch occupies residues 267–409; it reads AALRDIRAQY…YRKLLEGEES (143 aa). Y383 is modified (3'-nitrotyrosine). The tail stretch occupies residues 410-475; the sequence is RISVPVHSFA…DLDKSSIHSY (66 aa). Residues 453–475 are disordered; it reads EKVVTESQKEQHSDLDKSSIHSY. Y475 bears the Phosphotyrosine mark.

Belongs to the intermediate filament family. In terms of assembly, forms homodimers (in vitro). Homopolymerizes into a filamentous network (in vitro). Forms heterodimers with NEFL, NEFM or NEFH (in vitro). Interacts with DST (via C-terminus). Interacts with RAB7A; the interaction is direct. Interacts with PRKCE (via phorbol-ester/DAG-type 2 domain). In terms of processing, phosphorylated; phosphorylation increases after nerve injury in regenerating neurons. As to expression, expressed in the sciatic nerve and at very low levels in the central nervous system (at protein level). Expressed in the spinal cord, in the sciatic nerve at the level of the dorsal root ganglion and in trigeminal nerves (at protein level). Expressed in the cranial nerves in the hindbrain, including the sensory and motor trigeminal neurons, the mesencephalic trigeminal neurons, the spinal trigeminal neurons, and in the facial nerve (at protein level). Expressed in the cerebellum, with expression in the inferior cerebellar peduncle and the lateral deep cerebellar nucleus (at protein level). Expressed in vestibulocochlear neurons, such as the anteroventral cochlear nucleus, the dorsal cochlear nucleus, the superficial granule cell layer and the granule cell lamina (at protein level). Expressed in glossopharyngeal, vagal and hypoglossal neurons (at protein level). Expressed in peripheral sensory neurons, in the dorsal root ganglia and the spinal cord, and to a lower extent in motor neurons. Expressed in the optic tract of the central nervous system, especially in the lateral geniculate nucleus and the superior colliculus. Expressed in neurons of the pineal stalk in the cortex. Expressed in the spinal trigeminal tract of the midbrain, in the medulla and in the medial cerebellar peduncle.

The protein localises to the cytoplasm. The protein resides in the cytoskeleton. It is found in the cell projection. It localises to the axon. Its subcellular location is the perikaryon. Functionally, class-III neuronal intermediate filament protein. May form an independent structural network without the involvement of other neurofilaments or may cooperate with the neuronal intermediate filament proteins NEFL, NEFH, NEFM and INA to form filamentous networks. Assembly of the neuronal intermediate filaments may be regulated by RAB7A. Plays a role in the development of unmyelinated sensory neurons. May be involved in axon elongation and axon regeneration after injury. Inhibits neurite extension in type II spiral ganglion neurons in the cochlea. This Mus musculus (Mouse) protein is Peripherin (Prph).